Here is a 610-residue protein sequence, read N- to C-terminus: Propanediol dehydratase-reactivating factor large subunit (610 aa).

11 to 13 (NSS) serves as a coordination point for ATP. Residues Thr-105, Asp-166, and Asp-183 each contribute to the Mg(2+) site. Residues 459–462 (EEIK), 557–558 (GS), and Arg-591 contribute to the ATP site.

Belongs to the DdrA/PduG family. As to quaternary structure, forms a heterotetramer PduG(2)/PduH(2). The cofactor is Mg(2+).

Its subcellular location is the bacterial microcompartment. The enzyme catalyses ATP + H2O = ADP + phosphate + H(+). The protein operates within polyol metabolism; 1,2-propanediol degradation. Functionally, large subunit of the propanediol dehydratase-reactivating factor (DDR), which reactivates suicidally inhibited adenosylcobalamin-dependent propanediol dehydratase (diol dehydratase, DDH) found in the bacterial microcompartment (BMC) dedicated to 1,2-propanediol (1,2-PD) degradation. Reactivates inactivated DDH in the presence of ATP, Mg(2+) and free adenosylcobalamin (AdoCbl), by mediating the exchange of the tightly bound damaged cofactor AdoCbl for a free intact one. This subunit contains the adenosine nucleotide binding site. Its function is as follows. Expression of a cosmid containing the full 21-gene pdu operon in E.coli allows E.coli to grow on 1,2-propanediol (1,2-PD) with the appearance of bacterial microcompartments (BMC) in its cytoplasm. In terms of biological role, the 1,2-PD-specific bacterial microcompartment (BMC) concentrates low levels of 1,2-PD catabolic enzymes, concentrates volatile reaction intermediates thus enhancing pathway flux and keeps the level of toxic, mutagenic propionaldehyde low. This Citrobacter freundii protein is Propanediol dehydratase-reactivating factor large subunit.